The sequence spans 431 residues: Mitochondrial inner membrane protein OXA1-like (431 aa).

The N-terminal 22 residues, 1 to 22 (MATCLRGITKRVNLLQRRVYPS), are a transit peptide targeting the mitochondrion. The next 5 helical transmembrane spans lie at 119-139 (VVPAINEVAIAAADSAFPVAA), 155-175 (WWASIALTTVLIRGVTIPILL), 227-247 (FTPLKGLIIQGPIFISFFFAI), 269-289 (TTTDTTYILPLLTAVTFLIMV), and 312-332 (IIAFLSIPVLIGIEKALFCYW). The disordered stretch occupies residues 362 to 414 (NSSTRQPSPSSPLPFSFAEPKDQSVVAQEKPPMSSESSSSVPDRRISRSSVLN). Residues 392 to 402 (PPMSSESSSSV) show a composition bias toward low complexity.

Belongs to the OXA1/ALB3/YidC (TC 2.A.9.2) family.

The protein resides in the mitochondrion inner membrane. In terms of biological role, probably required for the insertion of integral membrane proteins into the mitochondrial inner membrane. May participate in the activity and assembly of cytochrome oxidase. This is Mitochondrial inner membrane protein OXA1-like (OXA1L) from Arabidopsis thaliana (Mouse-ear cress).